Reading from the N-terminus, the 242-residue chain is Triosephosphate isomerase (242 aa).

Position 9 to 11 (9 to 11 (NWK)) interacts with substrate. The active-site Electrophile is the histidine 99. The Proton acceptor role is filled by glutamate 169. Substrate contacts are provided by residues glycine 175, serine 207, and 228–229 (GG).

It belongs to the triosephosphate isomerase family. As to quaternary structure, homodimer.

The protein resides in the cytoplasm. The enzyme catalyses D-glyceraldehyde 3-phosphate = dihydroxyacetone phosphate. It participates in carbohydrate biosynthesis; gluconeogenesis. The protein operates within carbohydrate degradation; glycolysis; D-glyceraldehyde 3-phosphate from glycerone phosphate: step 1/1. Involved in the gluconeogenesis. Catalyzes stereospecifically the conversion of dihydroxyacetone phosphate (DHAP) to D-glyceraldehyde-3-phosphate (G3P). The protein is Triosephosphate isomerase of Mycoplasma mobile (strain ATCC 43663 / 163K / NCTC 11711) (Mesomycoplasma mobile).